The following is a 342-amino-acid chain: Phenylalanine--tRNA ligase alpha subunit (342 aa).

Mg(2+) is bound at residue Glu-255.

It belongs to the class-II aminoacyl-tRNA synthetase family. Phe-tRNA synthetase alpha subunit type 1 subfamily. Tetramer of two alpha and two beta subunits. Requires Mg(2+) as cofactor.

The protein resides in the cytoplasm. It carries out the reaction tRNA(Phe) + L-phenylalanine + ATP = L-phenylalanyl-tRNA(Phe) + AMP + diphosphate + H(+). The protein is Phenylalanine--tRNA ligase alpha subunit of Pelotomaculum thermopropionicum (strain DSM 13744 / JCM 10971 / SI).